Here is a 63-residue protein sequence, read N- to C-terminus: MSDKCGNCDCADSSQCVKKGNSIDIVETDKSYIEDVVMGVPAAESGGKCKCGTSCPCVNCTCD.

It belongs to the metallothionein superfamily. Type 15 family.

Its function is as follows. Metallothioneins have a high content of cysteine residues that bind various heavy metals. In Actinidia deliciosa (Kiwi), this protein is Metallothionein-like protein type 3.